A 266-amino-acid polypeptide reads, in one-letter code: 4-hydroxy-tetrahydrodipicolinate reductase (266 aa).

NAD(+)-binding positions include 8–13 (GAAGRM) and Glu33. NADP(+) is bound at residue Arg34. NAD(+) is bound by residues 97-99 (GST) and 121-124 (APNM). His154 acts as the Proton donor/acceptor in catalysis. Position 155 (His155) interacts with (S)-2,3,4,5-tetrahydrodipicolinate. Lys158 functions as the Proton donor in the catalytic mechanism. 164-165 (GT) is a binding site for (S)-2,3,4,5-tetrahydrodipicolinate.

It belongs to the DapB family.

It localises to the cytoplasm. The catalysed reaction is (S)-2,3,4,5-tetrahydrodipicolinate + NAD(+) + H2O = (2S,4S)-4-hydroxy-2,3,4,5-tetrahydrodipicolinate + NADH + H(+). The enzyme catalyses (S)-2,3,4,5-tetrahydrodipicolinate + NADP(+) + H2O = (2S,4S)-4-hydroxy-2,3,4,5-tetrahydrodipicolinate + NADPH + H(+). It participates in amino-acid biosynthesis; L-lysine biosynthesis via DAP pathway; (S)-tetrahydrodipicolinate from L-aspartate: step 4/4. Its function is as follows. Catalyzes the conversion of 4-hydroxy-tetrahydrodipicolinate (HTPA) to tetrahydrodipicolinate. The sequence is that of 4-hydroxy-tetrahydrodipicolinate reductase from Trichlorobacter lovleyi (strain ATCC BAA-1151 / DSM 17278 / SZ) (Geobacter lovleyi).